The sequence spans 156 residues: Arginine repressor (156 aa).

This sequence belongs to the ArgR family.

The protein resides in the cytoplasm. The protein operates within amino-acid biosynthesis; L-arginine biosynthesis [regulation]. In terms of biological role, regulates arginine biosynthesis genes. The chain is Arginine repressor from Escherichia coli O81 (strain ED1a).